Here is a 1021-residue protein sequence, read N- to C-terminus: Solute carrier family 12 member 3 (1021 aa).

The Cytoplasmic portion of the chain corresponds to 1 to 137 (MAELPTTETP…KNPEEPVRFG (137 aa)). Position 43 is a phosphoserine (Ser43). Thr46 bears the Phosphothreonine; by OXSR1 and STK39 mark. Ser49 carries the phosphoserine modification. Thr50 is subject to Phosphothreonine. Phosphothreonine; by OXSR1 and STK39 is present on residues Thr55 and Thr60. A Phosphoserine modification is found at Ser73. Phosphoserine; by OXSR1 and STK39 is present on Ser91. Thr124 bears the Phosphothreonine mark. Ser126 is subject to Phosphoserine. A discontinuously helical membrane pass occupies residues 138-167 (WVKGVMIRCMLNIWGVILYLRLPWITAQAG). Leu148 is a Na(+) binding site. Asn149 contacts polythiazide. Trp151 provides a ligand contact to Na(+). Residues 168-189 (IVLTWIIILLSVTVTSITGLSI) traverse the membrane as a helical segment. Over 190–220 (SAISTNGKVKSGGTYFLISRSLGPELGGSIG) the chain is Cytoplasmic. The chain crosses the membrane as a helical span at residues 221–243 (LIFAFANAVGVAMHTVGFAETVR). Polythiazide is bound by residues Asn227 and His234. The Extracellular portion of the chain corresponds to 244–255 (DLLQEYGAPIVD). Transmembrane regions (helical) follow at residues 256 to 280 (PINDIRIIAVVSVTVLLAISLAGME) and 281 to 303 (WESKAQVLFFLVIMVSFANYLVG). Residues 304–338 (TLIPPSEDKASKGFFSYRADIFVQNLVPDWRGPDG) lie on the Extracellular side of the membrane. Residues 339–360 (TFFGMFSIFFPSATGILAGANI) form a discontinuously helical membrane-spanning segment. Residue Thr352 coordinates polythiazide. Chloride contacts are provided by Gly353, Ile354, and Leu355. Asn359 is a binding site for polythiazide. Topologically, residues 361-371 (SGDLKDPAIAI) are cytoplasmic. Residues 372–393 (PKGTLMAIFWTTISYLAISATI) traverse the membrane as a helical segment. At 394–453 (GSCVVRDASGVLNDTVTPGWGACEGLACSYGWNFTECTQQHSCHYGLINYYQTMSMVSGF) the chain is on the extracellular side. N-linked (GlcNAc...) asparagine glycosylation is present at Asn406. A disulfide bridge connects residues Cys416 and Cys421. Residue Asn426 is glycosylated (N-linked (GlcNAc...) asparagine). The cysteines at positions 430 and 436 are disulfide-linked. Residues 454 to 477 (APLITAGIFGATLSSALACLVSAA) form a helical membrane-spanning segment. Na(+) is bound by residues Ala464, Ser467, and Ser468. The Cytoplasmic portion of the chain corresponds to 478–507 (KVFQCLCEDQLYPLIGFFGKGYGKNKEPVR). A helical transmembrane segment spans residues 508 to 522 (GYLLAYAIAVAFIII). At 523 to 527 (AELNT) the chain is on the extracellular side. The chain crosses the membrane as a helical span at residues 528–544 (IAPIISNFFLCSYALIN). Residue Tyr540 coordinates chloride. Over 545 to 567 (FSCFHASITNSPGWRPSFQYYNK) the chain is Cytoplasmic. 2 helical membrane passes run 568–587 (WAALFGAIISVVIMFLLTWW) and 588–599 (AALIAIGVVLFL). The Cytoplasmic segment spans residues 600–1021 (LLYVIYKKPE…QENVLTFYCQ (422 aa)). Positions 615–630 (SVQAGSYNLALSYSVG) are scissor helix. Leu648, Arg655, Val677, Gly741, Leu780, and Asn781 together coordinate ATP.

It belongs to the SLC12A transporter family. In terms of assembly, homodimer; adopts a domain-swap conformation at the scissor helices connecting the transmembrane domain and C-terminal domain. Interacts with KLHL3. Interacts with IL18R1; this interaction is increased by IL18 treatment. Post-translationally, ubiquitinated; ubiquitination is essential for regulation of endocytosis. The BCR(KLHL3) complex was initially identified as a candidate ubiquitin ligase for SLC12A3. However, it was later shown that it is not the case. Phosphorylated at Thr-46, Thr-55, Thr-60 and Ser-91 by OXSR1/OSR1 and STK39/SPAK downstream of WNK4, promoting its activity. Phosphorylated in response to IL18. In terms of tissue distribution, predominantly expressed in the kidney (at protein level). Localizes to the distal convoluted tubules (at protein level). Not detected in normal aorta, but abundantly expressed in fatty streaks and advanced atherosclerotic lesions (at protein level).

The protein localises to the cell membrane. It localises to the apical cell membrane. The enzyme catalyses chloride(out) + Na(+)(out) = chloride(in) + Na(+)(in). Phosphorylation by OXSR1/OSR1 and STK39/SPAK in kidney distal convoluted tubules downstream of WNK4 promotes its activity. Also activated by OXSR1/OSR1 and STK39/SPAK downstream of WNK3. Target of thiazide diuretics used in the treatment of high blood pressure. Thiazide drugs, such as polythiazide, specifically inhibit SLC12A3/NCC transporter activity by competing with chloride for binding and by locking SLC12A3/NCC in an outward-facing conformation. Electroneutral sodium and chloride ion cotransporter, which acts as a key mediator of sodium and chloride reabsorption in kidney distal convoluted tubules. Also acts as a receptor for the pro-inflammatory cytokine IL18, thereby contributing to IL18-induced cytokine production, including IFNG, IL6, IL18 and CCL2. May act either independently of IL18R1, or in a complex with IL18R1. In Homo sapiens (Human), this protein is Solute carrier family 12 member 3.